The sequence spans 329 residues: UDP-N-acetylenolpyruvoylglucosamine reductase (329 aa).

The FAD-binding PCMH-type domain occupies 28-192; it reads RVGGPADLLC…ARVEVRLRPG (165 aa). R172 is a catalytic residue. Residues 204–225 are disordered; that stretch reads DRERRRATQPLDRPTFGSTFTN. The Proton donor role is filled by S221. E291 is an active-site residue. The segment at 303–329 is disordered; that stretch reads LAGLDGHAADGGGPGAASGGARPREAT. Over residues 311-320 the composition is skewed to gly residues; that stretch reads ADGGGPGAAS.

This sequence belongs to the MurB family. FAD is required as a cofactor.

It is found in the cytoplasm. It carries out the reaction UDP-N-acetyl-alpha-D-muramate + NADP(+) = UDP-N-acetyl-3-O-(1-carboxyvinyl)-alpha-D-glucosamine + NADPH + H(+). Its pathway is cell wall biogenesis; peptidoglycan biosynthesis. In terms of biological role, cell wall formation. The sequence is that of UDP-N-acetylenolpyruvoylglucosamine reductase from Anaeromyxobacter dehalogenans (strain 2CP-C).